An 85-amino-acid polypeptide reads, in one-letter code: Hepcidin (85 aa).

An N-terminal signal peptide occupies residues M1–A24. A propeptide spanning residues V25 to A64 is cleaved from the precursor. Disulfide bonds link C66-C83, C69-C72, C70-C79, and C73-C82.

In terms of assembly, monomer. As to expression, expressed in all tissues tested, with highest levels of expression in kidney and lowest levels in liver. Intra-peritoneal injection of lipopolysaccharide results in increased expression in heart, spleen and stomach, but not in kidney or liver.

The protein localises to the secreted. In terms of biological role, seems to act as a signaling molecule involved in the maintenance of iron homeostasis. Seems to be required in conjunction with HFE to regulate both intestinal iron absorption and iron storage in macrophages. Has very strong antibacterial activity against the marine Gram-negative bacteria V.alginolyticus (MIC=24 uM), V.fluvialis, V.harveyis (MIC=12 uM) and V.parahaemolyticus (MIC=6 uM). Has antibacterial activity against the Gram-negative bacteria A.hydrophila (MIC=6 uM), E.coli (MIC=24 uM), and E.coli BL21(DE3)plysS (MIC=6 uM), and the Gram-positive bacteria B.cereus (MIC=24 uM), B.subtilis (MIC=6 uM), C.glutamicum (MIC=3 uM), M.luteus (MIC=3 uM), M.lysodeikticus, S.aureus (MIC=6 uM) and S.epidermis (MIC=12 uM). Possesses antifungal activity against A.niger (MIC=24 uM), F.graminearum (MIC24 uM) and F.solani (MIC=24 uM), but lacks antifungal activity against the yeasts P.pastoris GS115 and C.albicans. The polypeptide is Hepcidin (Larimichthys crocea (Large yellow croaker)).